The primary structure comprises 1087 residues: Apoptosis-stimulating of p53 protein 1 (1087 aa).

Positions 82 to 122 (HEDSPTESSEQGARQTQEQRTQRSVVNVPGEKRTENGVGNP) are disordered. Residues 87 to 106 (TESSEQGARQTQEQRTQRSV) are compositionally biased toward polar residues. Phosphoserine occurs at positions 332 and 335. Disordered regions lie at residues 374 to 415 (SSAA…GMEG), 442 to 721 (IGKG…PNIQ), and 734 to 878 (GMEG…TGHG). The segment covering 393–405 (KQNSASVKSTQMT) has biased composition (polar residues). The segment covering 445-458 (GPPPIPGVGKPLPP) has biased composition (pro residues). Over residues 459-476 (SYGTYPSSGPLGPGSTSS) the composition is skewed to low complexity. A compositionally biased stretch (polar residues) spans 506–520 (NAPQPGSSQQIQQRI). Over residues 523 to 536 (PPSPTYPPAGPPAF) the composition is skewed to pro residues. At arginine 552 the chain carries Asymmetric dimethylarginine. The span at 570-589 (QTVNSSSIYSMYLQQATPPK) shows a compositional bias: polar residues. Low complexity predominate over residues 610–625 (PVLPSGSASPSPLPFL). 2 positions are modified to phosphoserine: serine 679 and serine 708. Residues 805 to 831 (PQTTHQTAEPTEDNNNNVAPVPSTEQI) are compositionally biased toward polar residues. ANK repeat units follow at residues 917–949 (EGIT…AADS) and 950–982 (DGWT…ASTI). The 63-residue stretch at 1016–1078 (MNKGTVYALW…PKNLLGLYPR (63 aa)) folds into the SH3 domain.

The protein belongs to the ASPP family. Interacts with P53/TP53; the interaction promotes pro-apoptotic activity.

The protein localises to the cytoplasm. It is found in the nucleus. In terms of biological role, regulator that plays a central role in regulation of apoptosis via its interaction with p53/TP53. Regulates TP53 by enhancing the DNA binding and transactivation function of TP53 on the promoters of proapoptotic genes in vivo. In Mus musculus (Mouse), this protein is Apoptosis-stimulating of p53 protein 1 (Ppp1r13b).